We begin with the raw amino-acid sequence, 756 residues long: Photosystem I P700 chlorophyll a apoprotein A1 (756 aa).

8 helical membrane passes run 73-96, 159-182, 198-222, 298-316, 353-376, 392-418, 440-462, and 537-555; these read IFSA…FHGA, LYVT…FHYH, MNHH…HVSL, TAHH…GHMY, WHAQ…HHMY, LSLF…IYMV, AIIS…LYIH, and FLVH…LILL. Residues cysteine 579 and cysteine 588 each contribute to the [4Fe-4S] cluster site. Helical transmembrane passes span 595–616 and 670–692; these read HVFL…HFSW and LSAY…MFLF. Residue histidine 681 coordinates chlorophyll a'. 2 residues coordinate chlorophyll a: methionine 689 and tyrosine 697. Residue tryptophan 698 coordinates phylloquinone. Residues 730–750 traverse the membrane as a helical segment; the sequence is AVGVAHYLLGGIATTWAFFLA.

This sequence belongs to the PsaA/PsaB family. In terms of assembly, the PsaA/B heterodimer binds the P700 chlorophyll special pair and subsequent electron acceptors. PSI consists of a core antenna complex that captures photons, and an electron transfer chain that converts photonic excitation into a charge separation. The cyanobacterial PSI reaction center is composed of one copy each of PsaA,B,C,D,E,F,I,J,K,L,M and X, and forms trimeric complexes. Requires PSI electron transfer chain: 5 chlorophyll a, 1 chlorophyll a', 2 phylloquinones and 3 4Fe-4S clusters. PSI core antenna: 90 chlorophyll a, 22 carotenoids, 3 phospholipids and 1 galactolipid. P700 is a chlorophyll a/chlorophyll a' dimer, A0 is one or more chlorophyll a, A1 is one or both phylloquinones and FX is a shared 4Fe-4S iron-sulfur center. as cofactor.

It localises to the cellular thylakoid membrane. It carries out the reaction reduced [plastocyanin] + hnu + oxidized [2Fe-2S]-[ferredoxin] = oxidized [plastocyanin] + reduced [2Fe-2S]-[ferredoxin]. Its function is as follows. PsaA and PsaB bind P700, the primary electron donor of photosystem I (PSI), as well as the electron acceptors A0, A1 and FX. PSI is a plastocyanin/cytochrome c6-ferredoxin oxidoreductase, converting photonic excitation into a charge separation, which transfers an electron from the donor P700 chlorophyll pair to the spectroscopically characterized acceptors A0, A1, FX, FA and FB in turn. Oxidized P700 is reduced on the lumenal side of the thylakoid membrane by plastocyanin or cytochrome c6. In Cyanothece sp. (strain PCC 7425 / ATCC 29141), this protein is Photosystem I P700 chlorophyll a apoprotein A1.